Consider the following 299-residue polypeptide: ATP synthase gamma chain (299 aa).

This sequence belongs to the ATPase gamma chain family. F-type ATPases have 2 components, CF(1) - the catalytic core - and CF(0) - the membrane proton channel. CF(1) has five subunits: alpha(3), beta(3), gamma(1), delta(1), epsilon(1). CF(0) has three main subunits: a, b and c.

The protein resides in the cell inner membrane. Functionally, produces ATP from ADP in the presence of a proton gradient across the membrane. The gamma chain is believed to be important in regulating ATPase activity and the flow of protons through the CF(0) complex. The sequence is that of ATP synthase gamma chain from Rhodospirillum rubrum.